Reading from the N-terminus, the 471-residue chain is A-type ATP synthase subunit B (471 aa).

The protein belongs to the ATPase alpha/beta chains family. As to quaternary structure, has multiple subunits with at least A(3), B(3), C, D, E, F, H, I and proteolipid K(x).

Its subcellular location is the cell membrane. Functionally, component of the A-type ATP synthase that produces ATP from ADP in the presence of a proton gradient across the membrane. The B chain is a regulatory subunit. This is A-type ATP synthase subunit B from Natronomonas pharaonis (strain ATCC 35678 / DSM 2160 / CIP 103997 / JCM 8858 / NBRC 14720 / NCIMB 2260 / Gabara) (Halobacterium pharaonis).